Reading from the N-terminus, the 165-residue chain is Pro-MCH (165 aa).

A signal peptide spans 1-21 (MAKMSLSSYMLMLAFSLFSHG). Residues 69–82 (DESGFMKDDDDKTT) show a composition bias toward basic and acidic residues. Positions 69 to 89 (DESGFMKDDDDKTTKNTGSKQ) are disordered. Isoleucine 143 is modified (isoleucine amide). A disulfide bridge links cysteine 153 with cysteine 162.

It belongs to the melanin-concentrating hormone family. In terms of processing, pro-MCH is processed differentially in the brain and in peripheral organs producing two neuropeptides; NEI and MCH. A third peptide, NGE, may also be produced. Preferential processing in neurons by prohormone convertase 2 (PC2) generates NEI. MCH is generated in neurons of the lateral hypothalmic area by several prohormone convertases including PC1/3, PC2 and PC5/6. As to expression, MCH is present in all regions of the brain and in neurointermediate lobe of the pituarity gland, with highest concentrations in the hypothalamus. Also expressed to a much lesser extent in stomach, lamina propria of both duodenum and colon, ovary, thymus, pancreas, adrenal gland and testis (spermatogonia, early spermatocytes and Sertoli cells). Weak expression in heart and lung. The other peptides are expressed at least in Sertoli cells, nei being also expressed in brain, stomach and proximal duodenum. In brain exclusively mature mch and nei peptides are present. In peripheral tissues a large product, encompassing the NEI and MCH domains of the precursor, is found predominantly. At low levels fully processed MCH and NEI peptides are present in gut. No expression in peripheral blood.

It localises to the secreted. MCH inhibits ACTH secretion at the end of the light on period which corresponds to the peak of the circadian rhythm in ACTH. Inhibits also stress induced ACTH release during the light off period of the cycle. Involved as a neurotransmitter or neuromodulator in a broad array of neuronal functions. Stimulates sexual behavior when injected into the ventromedial nucleus, this effect is antagonized by NEI. In the medial preoptic area, stimulates anxiety and sexual behavior. Antagonizes inhibitory effect of melanotropin alpha on exploration behavior. Its function is as follows. NEI can influence differentiation of neuronal processes in brain neurons. Affects the content of neurofilament protein in neuritogenesis (in vitro). May also be a neuromodulatory factor. In behavioral tests, it stimulates exploration and anxiety when injected into the ventromedial nucleus. Also stimulates grooming, locomotion and rearing. May antagonize the inhibitory effect of mch on ACTH release. Reduces dopamine and dopac release in the ventromedial nucleus. The polypeptide is Pro-MCH (Pmch) (Rattus norvegicus (Rat)).